The primary structure comprises 443 residues: 5-methylthioadenosine/S-adenosylhomocysteine deaminase (443 aa).

2 residues coordinate Zn(2+): His74 and His76. Residues Glu103 and His196 each coordinate substrate. Zn(2+) is bound at residue His223. Positions 226 and 311 each coordinate substrate. A Zn(2+)-binding site is contributed by Asp311.

It belongs to the metallo-dependent hydrolases superfamily. MTA/SAH deaminase family. The cofactor is Zn(2+).

The enzyme catalyses S-adenosyl-L-homocysteine + H2O + H(+) = S-inosyl-L-homocysteine + NH4(+). It carries out the reaction S-methyl-5'-thioadenosine + H2O + H(+) = S-methyl-5'-thioinosine + NH4(+). In terms of biological role, catalyzes the deamination of 5-methylthioadenosine and S-adenosyl-L-homocysteine into 5-methylthioinosine and S-inosyl-L-homocysteine, respectively. Is also able to deaminate adenosine. The protein is 5-methylthioadenosine/S-adenosylhomocysteine deaminase of Haloquadratum walsbyi (strain DSM 16790 / HBSQ001).